A 338-amino-acid polypeptide reads, in one-letter code: MLNIAITTGEPAGIGPDITVTALLRLLRQPAPRHADVRWHVIGDAALLQARADAIGLGDAWRDAAAALTVVARPLGAPVRTGVLDAANGRYVLDLLDAAIDGCLPDAAGMARYDAMVTAPVQKSTINDAGVPFTGHTEYLAERSRTPRVVMMLAGPQPAHGNAMLRVALATTHLPLREVPDAITPAVLDETLDIVQRDLRARFGMAAPRILVTGLNPHAGEAGHLGREEIEVIEPAVVRARARGIDARGPYPADTLFQPRLLADADCVLAMYHDQGLAPLKYGTFGHGVNITLGLPFVRTSVDHGTALDLAGTGRAEAGSLLEAIDTAVEMARHAAHS.

Residues His-136 and Thr-137 each coordinate substrate. A divalent metal cation is bound by residues His-173, His-218, and His-273. Residues Lys-281, Asn-290, and Arg-299 each coordinate substrate.

The protein belongs to the PdxA family. As to quaternary structure, homodimer. The cofactor is Zn(2+). It depends on Mg(2+) as a cofactor. Co(2+) serves as cofactor.

It is found in the cytoplasm. It catalyses the reaction 4-(phosphooxy)-L-threonine + NAD(+) = 3-amino-2-oxopropyl phosphate + CO2 + NADH. The protein operates within cofactor biosynthesis; pyridoxine 5'-phosphate biosynthesis; pyridoxine 5'-phosphate from D-erythrose 4-phosphate: step 4/5. Catalyzes the NAD(P)-dependent oxidation of 4-(phosphooxy)-L-threonine (HTP) into 2-amino-3-oxo-4-(phosphooxy)butyric acid which spontaneously decarboxylates to form 3-amino-2-oxopropyl phosphate (AHAP). The protein is 4-hydroxythreonine-4-phosphate dehydrogenase of Ralstonia nicotianae (strain ATCC BAA-1114 / GMI1000) (Ralstonia solanacearum).